A 746-amino-acid chain; its full sequence is Protein zyg-11 homolog (746 aa).

LRR repeat units follow at residues 185-209 (LPRL…GLRS), 216-241 (MHQL…VLQH), and 265-289 (LPQL…AFVE).

This sequence belongs to the zyg-11 family.

Serves as substrate adapter subunit in an E3 ubiquitin ligase complex zyg11-cul2-elongin BC. Targets substrates bearing N-terminal glycine degrons for proteasomal degradation. In Danio rerio (Zebrafish), this protein is Protein zyg-11 homolog (zyg11).